Reading from the N-terminus, the 603-residue chain is Polypeptide N-acetylgalactosaminyltransferase 9 (603 aa).

Residues 1–6 lie on the Cytoplasmic side of the membrane; it reads MAVARK. The helical; Signal-anchor for type II membrane protein transmembrane segment at 7 to 29 threads the bilayer; that stretch reads IRTLLTVNILVFVGIVLFSVYCR. Over 30 to 603 the chain is Lumenal; that stretch reads LQGRSQELVR…IRNWIKHARH (574 aa). 2 cysteine pairs are disulfide-bonded: cysteine 141–cysteine 372 and cysteine 363–cysteine 442. The catalytic subdomain A stretch occupies residues 150–261; the sequence is LPQVSVVFIF…TGWAEPALSR (112 aa). Positions 191 and 222 each coordinate substrate. Residues aspartate 245, histidine 247, and histidine 377 each contribute to the Mn(2+) site. Residues 318–380 are catalytic subdomain B; the sequence is PIRTPAMIGC…PCSRVAHIER (63 aa). Substrate is bound by residues arginine 380 and tyrosine 385. N-linked (GlcNAc...) asparagine glycosylation is present at asparagine 460. The Ricin B-type lectin domain occupies 464-600; sequence TYGEVRNSKA…KWMIRNWIKH (137 aa). 3 disulfide bridges follow: cysteine 477–cysteine 493, cysteine 525–cysteine 540, and cysteine 567–cysteine 587.

The protein belongs to the glycosyltransferase 2 family. GalNAc-T subfamily. Mn(2+) serves as cofactor. In terms of tissue distribution, specifically expressed in brain. Not expressed in heart, placenta, lung, liver, skeletal muscle, kidney, pancreas, spleen, thymus, prostate, testis, ovary, small intestine, colon and leukocyte. In brain, it is expressed in cerebellum, frontal lobe, temporal lobe, putamen and spinal cord, weakly expressed in cerebral cortex. Not expressed in medulla and occipital pole.

Its subcellular location is the golgi apparatus membrane. The enzyme catalyses L-seryl-[protein] + UDP-N-acetyl-alpha-D-galactosamine = a 3-O-[N-acetyl-alpha-D-galactosaminyl]-L-seryl-[protein] + UDP + H(+). It carries out the reaction L-threonyl-[protein] + UDP-N-acetyl-alpha-D-galactosamine = a 3-O-[N-acetyl-alpha-D-galactosaminyl]-L-threonyl-[protein] + UDP + H(+). It functions in the pathway protein modification; protein glycosylation. Its function is as follows. Catalyzes the initial reaction in O-linked oligosaccharide biosynthesis, the transfer of an N-acetyl-D-galactosamine residue to a serine or threonine residue on the protein receptor. Does not glycosylate apomucin or SDC3. The sequence is that of Polypeptide N-acetylgalactosaminyltransferase 9 (GALNT9) from Homo sapiens (Human).